The primary structure comprises 331 residues: Small ribosomal subunit protein uS2 (331 aa).

The protein belongs to the universal ribosomal protein uS2 family.

This Rhodopseudomonas palustris (strain BisB5) protein is Small ribosomal subunit protein uS2.